The primary structure comprises 184 residues: Oligoribonuclease (184 aa).

One can recognise an Exonuclease domain in the interval 7 to 170 (LIWIDLEMTG…DDIRESVAEL (164 aa)). Residue Tyr128 is part of the active site.

The protein belongs to the oligoribonuclease family.

The protein localises to the cytoplasm. 3'-to-5' exoribonuclease specific for small oligoribonucleotides. This Baumannia cicadellinicola subsp. Homalodisca coagulata protein is Oligoribonuclease.